We begin with the raw amino-acid sequence, 440 residues long: ATP-dependent protease ATPase subunit HslU (440 aa).

ATP contacts are provided by residues Ile18 and 60–65 (GVGKTE). The segment at 138–159 (RAQSFDQEDPSAGTRQKLRKKL) is disordered. The ATP site is built by Asp252, Glu318, and Arg390.

Belongs to the ClpX chaperone family. HslU subfamily. A double ring-shaped homohexamer of HslV is capped on each side by a ring-shaped HslU homohexamer. The assembly of the HslU/HslV complex is dependent on binding of ATP.

It is found in the cytoplasm. Its function is as follows. ATPase subunit of a proteasome-like degradation complex; this subunit has chaperone activity. The binding of ATP and its subsequent hydrolysis by HslU are essential for unfolding of protein substrates subsequently hydrolyzed by HslV. HslU recognizes the N-terminal part of its protein substrates and unfolds these before they are guided to HslV for hydrolysis. This is ATP-dependent protease ATPase subunit HslU from Alkalilimnicola ehrlichii (strain ATCC BAA-1101 / DSM 17681 / MLHE-1).